A 186-amino-acid polypeptide reads, in one-letter code: Cell division protein SepF (186 aa).

Disordered stretches follow at residues 14–59 (EHDE…NETS) and 157–186 (GRSQESNETSSSVSSDNFPTWGYETSRLAQ). Residues 16–27 (DEYEEDYDEEME) show a composition bias toward acidic residues. Low complexity predominate over residues 159-171 (SQESNETSSSVSS).

It belongs to the SepF family. In terms of assembly, homodimer. Interacts with FtsZ.

It is found in the cytoplasm. Its function is as follows. Cell division protein that is part of the divisome complex and is recruited early to the Z-ring. Probably stimulates Z-ring formation, perhaps through the cross-linking of FtsZ protofilaments. Its function overlaps with FtsA. The protein is Cell division protein SepF of Synechocystis sp. (strain ATCC 27184 / PCC 6803 / Kazusa).